The primary structure comprises 120 residues: Large ribosomal subunit protein eL18 (120 aa).

This sequence belongs to the eukaryotic ribosomal protein eL18 family.

The chain is Large ribosomal subunit protein eL18 from Thermococcus onnurineus (strain NA1).